The primary structure comprises 129 residues: ATP synthase epsilon chain (129 aa).

This sequence belongs to the ATPase epsilon chain family. As to quaternary structure, F-type ATPases have 2 components, CF(1) - the catalytic core - and CF(0) - the membrane proton channel. CF(1) has five subunits: alpha(3), beta(3), gamma(1), delta(1), epsilon(1). CF(0) has three main subunits: a, b and c.

The protein localises to the cell inner membrane. In terms of biological role, produces ATP from ADP in the presence of a proton gradient across the membrane. The chain is ATP synthase epsilon chain from Campylobacter jejuni subsp. jejuni serotype O:6 (strain 81116 / NCTC 11828).